Reading from the N-terminus, the 51-residue chain is YVSQRLCGSQLVDTLYSVCRHRGFYRPNDGIVDQCCTNICSRNQLMSYCND.

Disulfide bonds link cysteine 7–cysteine 36, cysteine 19–cysteine 49, and cysteine 35–cysteine 40.

The protein belongs to the insulin family. Heterodimer of a B chain and an A chain linked by two disulfide bonds.

Its subcellular location is the secreted. Insulin decreases blood glucose concentration. It increases cell permeability to monosaccharides, amino acids and fatty acids. It accelerates glycolysis, the pentose phosphate cycle, and glycogen synthesis in liver. The polypeptide is Insulin (INS) (Myocastor coypus (Coypu)).